The chain runs to 461 residues: E3 ubiquitin-protein ligase parkin (461 aa).

Residues 30 to 90 (VNIYVKSNVG…DSTVIEVLDF (61 aa)) enclose the Ubiquitin-like domain. Residue Ser-92 is modified to Phosphoserine. The RING-type 0; atypical zinc-finger motif lies at 145–227 (AHFFIYCANP…SQGENDTAVP (83 aa)). 4 residues coordinate Zn(2+): Cys-151, Cys-155, Cys-167, and Cys-170. Thr-176 carries the post-translational modification Phosphothreonine. Residues Cys-197, Cys-202, Cys-213, His-216, Cys-240, Cys-243, Cys-255, His-259, Cys-262, Cys-265, Cys-291, Cys-295, Cys-334, Cys-339, Cys-354, Cys-356, Cys-361, Cys-364, His-369, Cys-373, Cys-415, and Cys-418 each contribute to the Zn(2+) site. A TRIAD supradomain region spans residues 236–461 (KKIPCLACTD…RDCMASHWFG (226 aa)). The segment at 240–295 (CLACTDICDPVLVFSCDNRHVTCLECFKNYCGSRLKDRQFLSHPDFGYTLPCPAGC) adopts an RING-type 1 zinc-finger fold. 2 IBR-type zinc fingers span residues 315-373 (EQYH…LGEC) and 411-452 (LTKP…PWER). Residues 415–446 (CPKCRTSTERAGGCMHMICTRANCGFHWCWVC) form an RING-type 2; atypical zinc finger. Cys-428 is an active-site residue. Residues Cys-433, Cys-438, Cys-443, Cys-446, Cys-454, and His-458 each coordinate Zn(2+).

Belongs to the RBR family. Parkin subfamily. In terms of assembly, forms an E3 ubiquitin ligase complex with E2 ubiquitin-conjugating enzymes. In terms of processing, auto-ubiquitinates in an E2-dependent manner leading to its own degradation. Phosphorylated. Activation requires phosphorylation at Ser-92 by Pink1 and binding to Pink1-phosphorylated polyubiquitin chains. Phosphorylation at Thr-176 by Pink1 is also important for mitochondrial localization.

It is found in the mitochondrion. It localises to the cytoplasm. The protein resides in the cytosol. It catalyses the reaction [E2 ubiquitin-conjugating enzyme]-S-ubiquitinyl-L-cysteine + [acceptor protein]-L-lysine = [E2 ubiquitin-conjugating enzyme]-L-cysteine + [acceptor protein]-N(6)-ubiquitinyl-L-lysine.. It functions in the pathway protein modification; protein ubiquitination. With respect to regulation, in the autoinhibited state the side chain of Phe-460 inserts into a hydrophobic groove in RING-0, occluding the ubiquitin acceptor site Cys-428, whereas the REP repressor element binds RING-1 and blocks its E2-binding site. Activation of park requires 2 steps: (1) phosphorylation at Ser-92 by Pink1 and (2) binding to phosphorylated ubiquitin, leading to unlock repression of the catalytic Cys-428 by the RING-0 region via an allosteric mechanism and converting park to its fully-active form. According to another report, phosphorylation at Ser-92 by Pink1 is not essential for activation and only binding to phosphorylated ubiquitin is essential to unlock repression. Functionally, E3 ubiquitin-protein ligase which accepts ubiquitin from E2 ubiquitin-conjugating enzymes in the form of a thioester and then directly transfers the ubiquitin to targeted substrates, such as Marf, Opa1, Sep1, Tom20 and porin. Mediates monoubiquitination as well as 'Lys-6', 'Lys-11', 'Lys-48'-linked and 'Lys-63'-linked polyubiquitination of substrates, depending on the context. Protects against mitochondrial dysfunction during cellular stress, by acting downstream of Pink1, to coordinate mitochondrial quality control mechanisms that remove and replace dysfunctional mitochondrial components. Depending on the severity of mitochondrial damage and/or dysfunction, activity ranges from preventing apoptosis and stimulating mitochondrial biogenesis to regulating mitochondrial dynamics and eliminating severely damaged mitochondria via mitophagy. Appears to be particularly important in maintaining the physiology and function of cells with high energy demands that are undergoing stress or altered metabolic environment, including spermatids, muscle cells and neurons such as the dopaminergic (DA) neurons. Activation and recruitment onto the outer membrane of damaged/dysfunctional mitochondria (OMM) requires Pink1-mediated phosphorylation of both park and ubiquitin. In depolarized mitochondria, mediates the decision between mitophagy or preventing apoptosis by inducing either the poly- or monoubiquitination of porin/VDAC; polyubiquitination of porin promotes mitophagy, while monoubiquitination of porin decreases mitochondrial calcium influx which ultimately inhibits apoptosis. When cellular stress results in irreversible mitochondrial damage, promotes the autophagic degradation of dysfunctional depolarized mitochondria (mitophagy) by promoting the ubiquitination of mitochondrial proteins. Preferentially assembles 'Lys-6'-, 'Lys-11'- and 'Lys-63'-linked polyubiquitin chains following mitochondrial damage, leading to mitophagy. In developing tissues, inhibits JNK-mediated apoptosis by negatively regulating bsk transcription. The Pink1-park pathway also promotes fission and/or inhibits fusion of damaged mitochondria by mediating the ubiquitination and subsequent degradation of proteins involved in mitochondrial fusion/fission such as Marf and Opa1. This prevents the refusion of unhealthy mitochondria with the healthy mitochondrial network and/or initiates mitochondrial fragmentation facilitating their later engulfment by autophagosomes. Regulates motility of damaged mitochondria by phosphorylating Miro which likely promotes its park-dependent degradation by the proteasome; in motor neurons, this inhibits mitochondrial intracellular anterograde transport along the axons which probably increases the chance of the mitochondria being eliminated in the soma. The Pink1-park pathway is also involved in mitochondrial regeneration processes such as promoting mitochondrial biogenesis, activating localized mitochondrial repair, promoting selective turnover of mitochondrial proteins and initiating the mitochondrial import of endogenous proteins. Involved in mitochondrial biogenesis via the ubiquitination of transcriptional repressor Paris which leads to its subsequent proteasomal degradation and allows activation of the transcription factor srl. Promotes localized mitochondrial repair by activating the translation of specific nuclear-encoded mitochondrial RNAs (nc-mtRNAs) on the mitochondrial surface, including several key electron transport chain component nc-mtRNAs. The protein is E3 ubiquitin-protein ligase parkin of Pediculus humanus subsp. corporis (Body louse).